A 198-amino-acid chain; its full sequence is Recombination protein RecR (198 aa).

A C4-type zinc finger spans residues 59–74 (CSLCCNYTDHDPCPIC). A Toprim domain is found at 82–175 (TLLCIVEQPR…KVTRIAHGLP (94 aa)).

Belongs to the RecR family.

In terms of biological role, may play a role in DNA repair. It seems to be involved in an RecBC-independent recombinational process of DNA repair. It may act with RecF and RecO. The protein is Recombination protein RecR of Desulfitobacterium hafniense (strain Y51).